The sequence spans 294 residues: Small ribosomal subunit protein uS2 (294 aa).

Residues 232 to 294 (RATGTTEAPE…SAAGEADAAK (63 aa)) form a disordered region. Positions 246 to 259 (EWERELLEGSKSEE) are enriched in basic and acidic residues. Positions 260–294 (AAAPAAAEEAPAAAEEAPAAAEATESAAGEADAAK) are enriched in low complexity.

It belongs to the universal ribosomal protein uS2 family.

The protein is Small ribosomal subunit protein uS2 of Arthrobacter sp. (strain FB24).